The chain runs to 312 residues: Ribosomal RNA small subunit methyltransferase H (312 aa).

S-adenosyl-L-methionine contacts are provided by residues 35–37 (GGH), Asp-55, Phe-80, Asp-102, and Gln-109.

This sequence belongs to the methyltransferase superfamily. RsmH family.

It is found in the cytoplasm. It catalyses the reaction cytidine(1402) in 16S rRNA + S-adenosyl-L-methionine = N(4)-methylcytidine(1402) in 16S rRNA + S-adenosyl-L-homocysteine + H(+). In terms of biological role, specifically methylates the N4 position of cytidine in position 1402 (C1402) of 16S rRNA. This is Ribosomal RNA small subunit methyltransferase H from Pseudoalteromonas translucida (strain TAC 125).